We begin with the raw amino-acid sequence, 259 residues long: Type III pantothenate kinase (259 aa).

Position 6 to 13 (6 to 13) interacts with ATP; that stretch reads DVGNTNCT. 107-110 is a binding site for substrate; the sequence is GSDR. Catalysis depends on D109, which acts as the Proton acceptor. D129 serves as a coordination point for K(+). An ATP-binding site is contributed by T132. T184 serves as a coordination point for substrate.

Belongs to the type III pantothenate kinase family. As to quaternary structure, homodimer. Requires NH4(+) as cofactor. The cofactor is K(+).

It localises to the cytoplasm. The catalysed reaction is (R)-pantothenate + ATP = (R)-4'-phosphopantothenate + ADP + H(+). It functions in the pathway cofactor biosynthesis; coenzyme A biosynthesis; CoA from (R)-pantothenate: step 1/5. Functionally, catalyzes the phosphorylation of pantothenate (Pan), the first step in CoA biosynthesis. This chain is Type III pantothenate kinase, found in Listeria innocua serovar 6a (strain ATCC BAA-680 / CLIP 11262).